We begin with the raw amino-acid sequence, 117 residues long: Ribosome-binding factor A (117 aa).

This sequence belongs to the RbfA family. In terms of assembly, monomer. Binds 30S ribosomal subunits, but not 50S ribosomal subunits or 70S ribosomes.

The protein resides in the cytoplasm. Its function is as follows. One of several proteins that assist in the late maturation steps of the functional core of the 30S ribosomal subunit. Associates with free 30S ribosomal subunits (but not with 30S subunits that are part of 70S ribosomes or polysomes). Required for efficient processing of 16S rRNA. May interact with the 5'-terminal helix region of 16S rRNA. The protein is Ribosome-binding factor A of Syntrophobacter fumaroxidans (strain DSM 10017 / MPOB).